The chain runs to 330 residues: Putative [LysW]-L-2-aminoadipate/[LysW]-L-glutamate phosphate reductase (330 aa).

Residues 10 to 13 (SGYI) and 34 to 36 (SRR) contribute to the NADP(+) site. Cys-142 is an active-site residue. Asn-297 contacts NADP(+).

It belongs to the NAGSA dehydrogenase family. Type 1 subfamily. LysY sub-subfamily.

It localises to the cytoplasm. It catalyses the reaction [amino-group carrier protein]-C-terminal-N-(1-carboxy-5-oxopentan-1-yl)-L-glutamine + phosphate + NADP(+) = [amino-group carrier protein]-C-terminal-N-(1-carboxy-5-phosphooxy-5-oxopentan-1-yl)-L-glutamine + NADPH + H(+). It carries out the reaction [amino-group carrier protein]-C-terminal-gamma-(L-glutamyl-5-semialdehyde)-L-glutamate + phosphate + NADP(+) = [amino-group carrier protein]-C-terminal-gamma-(5-phospho-L-glutamyl)-L-glutamate + NADPH + H(+). It functions in the pathway amino-acid biosynthesis; L-lysine biosynthesis via AAA pathway; L-lysine from L-alpha-aminoadipate (Thermus route): step 3/5. The protein operates within amino-acid biosynthesis; L-arginine biosynthesis. Involved in both the arginine and lysine biosynthetic pathways. The polypeptide is Putative [LysW]-L-2-aminoadipate/[LysW]-L-glutamate phosphate reductase (Thermococcus kodakarensis (strain ATCC BAA-918 / JCM 12380 / KOD1) (Pyrococcus kodakaraensis (strain KOD1))).